The primary structure comprises 665 residues: Succinate dehydrogenase [ubiquinone] flavoprotein subunit B, mitochondrial (665 aa).

A mitochondrion-targeting transit peptide spans 1-45 (MALLKVAPSRLLSRALQLTSTLQNCTATSIAARRNFHFTVYGRKD). FAD is bound by residues Ala72, Ala75, Thr94, Lys95, and Ser101. Residue His102 is modified to Tele-8alpha-FAD histidine. 4 residues coordinate FAD: Thr103, Gly108, Ala224, and Asp278. Residues His299, Arg343, and His410 each coordinate oxaloacetate. The active-site Proton acceptor is the Arg343. Glu443 contributes to the FAD binding site. Oxaloacetate is bound by residues Arg454 and Ala457. Ser459 and Leu460 together coordinate FAD.

Belongs to the FAD-dependent oxidoreductase 2 family. FRD/SDH subfamily. Component of complex II composed of four subunits: a flavoprotein (FP), an iron-sulfur protein (IP), and a cytochrome b composed of a large and a small subunit. Requires FAD as cofactor.

Its subcellular location is the mitochondrion inner membrane. It carries out the reaction a ubiquinone + succinate = a ubiquinol + fumarate. The enzyme catalyses (R)-malate + a quinone = enol-oxaloacetate + a quinol. It catalyses the reaction (S)-malate + a quinone = enol-oxaloacetate + a quinol. It functions in the pathway carbohydrate metabolism; tricarboxylic acid cycle; fumarate from succinate (eukaryal route): step 1/1. Enol-oxaloacetate inhibits the succinate dehydrogenase activity. Functionally, flavoprotein (FP) subunit of succinate dehydrogenase (SDH) that is involved in complex II of the mitochondrial electron transport chain and is responsible for transferring electrons from succinate to ubiquinone (coenzyme Q). SDH also oxidizes malate to the non-canonical enol form of oxaloacetate, enol-oxaloacetate. Enol-oxaloacetate, which is a potent inhibitor of the succinate dehydrogenase activity, is further isomerized into keto-oxaloacetate. This is Succinate dehydrogenase [ubiquinone] flavoprotein subunit B, mitochondrial (sdha-b) from Xenopus laevis (African clawed frog).